The following is a 103-amino-acid chain: Large ribosomal subunit protein uL24 (103 aa).

It belongs to the universal ribosomal protein uL24 family. Part of the 50S ribosomal subunit.

In terms of biological role, one of two assembly initiator proteins, it binds directly to the 5'-end of the 23S rRNA, where it nucleates assembly of the 50S subunit. Its function is as follows. One of the proteins that surrounds the polypeptide exit tunnel on the outside of the subunit. This Anoxybacillus flavithermus (strain DSM 21510 / WK1) protein is Large ribosomal subunit protein uL24.